A 151-amino-acid chain; its full sequence is Putative phosphatidylglycerol/phosphatidylinositol transfer protein 3 (151 aa).

An N-terminal signal peptide occupies residues 1–26 (MKYSQNQIVYVIFFFIILIVVKPIES).

This sequence belongs to the NPC2 family. In terms of assembly, monomer.

In terms of biological role, catalyzes the intermembrane transfer of phosphatidylglycerol and phosphatidylinositol. The sequence is that of Putative phosphatidylglycerol/phosphatidylinositol transfer protein 3 from Dictyostelium discoideum (Social amoeba).